We begin with the raw amino-acid sequence, 144 residues long: Small ribosomal subunit protein uS19 (144 aa).

This sequence belongs to the universal ribosomal protein uS19 family.

Protein S19 forms a complex with S13 that binds strongly to the 16S ribosomal RNA. This chain is Small ribosomal subunit protein uS19 (rps19), found in Aeropyrum pernix (strain ATCC 700893 / DSM 11879 / JCM 9820 / NBRC 100138 / K1).